Consider the following 443-residue polypeptide: Chorionicgonadotropic hormone-like protein (443 aa).

Residues 263–286 (RCAGRPCPRRHRRPCNASKSHRPM) are compositionally biased toward basic residues. Residues 263–292 (RCAGRPCPRRHRRPCNASKSHRPMRMQQRD) form a disordered region.

To mammalian CGHB.

It is found in the secreted. Its subcellular location is the cell wall. Cell wall protein that resembles the beta subunit of human chorionic gonadotropin. Stimulates growth and change in morphology. This Stenotrophomonas maltophilia (Pseudomonas maltophilia) protein is Chorionicgonadotropic hormone-like protein (xcg).